The primary structure comprises 329 residues: Biotin synthase (329 aa).

The region spanning 38–262 (NTIQVSTLLS…IMPHSYIRLS (225 aa)) is the Radical SAM core domain. Residues cysteine 53, cysteine 57, and cysteine 60 each contribute to the [4Fe-4S] cluster site. [2Fe-2S] cluster is bound by residues cysteine 97, cysteine 128, cysteine 188, and arginine 260.

Belongs to the radical SAM superfamily. Biotin synthase family. As to quaternary structure, homodimer. Requires [4Fe-4S] cluster as cofactor. [2Fe-2S] cluster serves as cofactor.

It carries out the reaction (4R,5S)-dethiobiotin + (sulfur carrier)-SH + 2 reduced [2Fe-2S]-[ferredoxin] + 2 S-adenosyl-L-methionine = (sulfur carrier)-H + biotin + 2 5'-deoxyadenosine + 2 L-methionine + 2 oxidized [2Fe-2S]-[ferredoxin]. The protein operates within cofactor biosynthesis; biotin biosynthesis; biotin from 7,8-diaminononanoate: step 2/2. Catalyzes the conversion of dethiobiotin (DTB) to biotin by the insertion of a sulfur atom into dethiobiotin via a radical-based mechanism. This Acinetobacter baumannii (strain SDF) protein is Biotin synthase.